The primary structure comprises 91 residues: MARVTVQDAVEKIGNRFDLVLVAARRARQIQSGGKDALVPEENDKVTVIALREIEEGLITNQILDVRERQEQQEQEAAEIQAVTAIAEGRR.

The protein belongs to the RNA polymerase subunit omega family. In terms of assembly, the RNAP catalytic core consists of 2 alpha, 1 beta, 1 beta' and 1 omega subunit. When a sigma factor is associated with the core the holoenzyme is formed, which can initiate transcription.

The catalysed reaction is RNA(n) + a ribonucleoside 5'-triphosphate = RNA(n+1) + diphosphate. Promotes RNA polymerase assembly. Latches the N- and C-terminal regions of the beta' subunit thereby facilitating its interaction with the beta and alpha subunits. The sequence is that of DNA-directed RNA polymerase subunit omega from Yersinia enterocolitica serotype O:8 / biotype 1B (strain NCTC 13174 / 8081).